Reading from the N-terminus, the 182-residue chain is Protein GrpE (182 aa).

Belongs to the GrpE family. In terms of assembly, homodimer.

The protein localises to the cytoplasm. Its function is as follows. Participates actively in the response to hyperosmotic and heat shock by preventing the aggregation of stress-denatured proteins, in association with DnaK and GrpE. It is the nucleotide exchange factor for DnaK and may function as a thermosensor. Unfolded proteins bind initially to DnaJ; upon interaction with the DnaJ-bound protein, DnaK hydrolyzes its bound ATP, resulting in the formation of a stable complex. GrpE releases ADP from DnaK; ATP binding to DnaK triggers the release of the substrate protein, thus completing the reaction cycle. Several rounds of ATP-dependent interactions between DnaJ, DnaK and GrpE are required for fully efficient folding. The chain is Protein GrpE from Aquifex aeolicus (strain VF5).